A 231-amino-acid polypeptide reads, in one-letter code: Small ribosomal subunit protein uS2c (231 aa).

The protein belongs to the universal ribosomal protein uS2 family.

It is found in the plastid. It localises to the chloroplast. This chain is Small ribosomal subunit protein uS2c (rps2), found in Gracilaria tenuistipitata var. liui (Red alga).